The sequence spans 334 residues: Probable tRNA pseudouridine synthase B (334 aa).

Asp82 functions as the Nucleophile in the catalytic mechanism. A PUA domain is found at Leu250–Met325.

Belongs to the pseudouridine synthase TruB family. Type 2 subfamily.

The enzyme catalyses uridine(55) in tRNA = pseudouridine(55) in tRNA. In terms of biological role, could be responsible for synthesis of pseudouridine from uracil-55 in the psi GC loop of transfer RNAs. The polypeptide is Probable tRNA pseudouridine synthase B (Pyrococcus abyssi (strain GE5 / Orsay)).